Reading from the N-terminus, the 344-residue chain is Probable nicotinate-nucleotide adenylyltransferase/Ap4A hydrolase (344 aa).

The naMN adenylyltransferase stretch occupies residues 1–182 (MIFGGAFDPL…YIHQHNIYLK (182 aa)). An ap4A hydrolase region spans residues 191–344 (EPRMQHCLRV…LKYVRSLQKN (154 aa)). The 112-residue stretch at 193 to 304 (RMQHCLRVGQ…IYLADKLEPM (112 aa)) folds into the HD domain. His196 serves as a coordination point for ADP. The Fe cation site is built by His196, His225, and Asp226. ADP-binding positions include 226 to 229 (DLAK), His255, 281 to 282 (HT), Asp299, and Arg305. Residue Asp299 coordinates Fe cation.

In the N-terminal section; belongs to the NadD family. It in the C-terminal section; belongs to the Ap4A hydrolase YqeK family.

It catalyses the reaction nicotinate beta-D-ribonucleotide + ATP + H(+) = deamido-NAD(+) + diphosphate. The catalysed reaction is P(1),P(4)-bis(5'-adenosyl) tetraphosphate + H2O = 2 ADP + 2 H(+). It functions in the pathway cofactor biosynthesis; NAD(+) biosynthesis; deamido-NAD(+) from nicotinate D-ribonucleotide: step 1/1. In terms of biological role, catalyzes the reversible adenylation of nicotinate mononucleotide (NaMN) to nicotinic acid adenine dinucleotide (NaAD). Hydrolyzes diadenosine 5',5'''-P1,P4-tetraphosphate (Ap4A) to yield ADP. In Mycoplasma pneumoniae (strain ATCC 29342 / M129 / Subtype 1) (Mycoplasmoides pneumoniae), this protein is Probable nicotinate-nucleotide adenylyltransferase/Ap4A hydrolase.